A 103-amino-acid chain; its full sequence is Large ribosomal subunit protein mL63 (103 aa).

It belongs to the mitochondrion-specific ribosomal protein mL63 family.

The protein localises to the mitochondrion. The protein is Large ribosomal subunit protein mL63 (mrpl57) of Danio rerio (Zebrafish).